Here is a 393-residue protein sequence, read N- to C-terminus: Trehalose import ATP-binding protein SugC (393 aa).

Positions 4–235 (IVLDHVNKSY…PANLFVAGFI (232 aa)) constitute an ABC transporter domain. 37 to 44 (GPSGCGKT) serves as a coordination point for ATP. Residues 135 to 139 (LSGGQ) carry the Helical C-loop; LSGGQ motif motif.

The protein belongs to the ABC transporter superfamily. As to quaternary structure, monomer. Homodimerizes in the presence of ATP. The complex is composed of two ATP-binding proteins (SugC), two transmembrane proteins (SugA and SugB) and a solute-binding protein (LpqY).

It is found in the cell inner membrane. It catalyses the reaction alpha,alpha-trehalose(out) + ATP + H2O = alpha,alpha-trehalose(in) + ADP + phosphate + H(+). Its function is as follows. Part of the ABC transporter complex LpqY-SugA-SugB-SugC, which is highly specific for uptake of trehalose. Involved in the recycling of extracellular trehalose released from trehalose-containing molecules synthesized by M.tuberculosis. Trehalose uptake is essential for virulence. Responsible for energy coupling to the transport system. In Mycobacterium tuberculosis (strain CDC 1551 / Oshkosh), this protein is Trehalose import ATP-binding protein SugC (sugC).